The chain runs to 283 residues: ATP phosphoribosyltransferase (283 aa).

It belongs to the ATP phosphoribosyltransferase family. Long subfamily. It depends on Mg(2+) as a cofactor.

It is found in the cytoplasm. The catalysed reaction is 1-(5-phospho-beta-D-ribosyl)-ATP + diphosphate = 5-phospho-alpha-D-ribose 1-diphosphate + ATP. It participates in amino-acid biosynthesis; L-histidine biosynthesis; L-histidine from 5-phospho-alpha-D-ribose 1-diphosphate: step 1/9. With respect to regulation, feedback inhibited by histidine. Its function is as follows. Catalyzes the condensation of ATP and 5-phosphoribose 1-diphosphate to form N'-(5'-phosphoribosyl)-ATP (PR-ATP). Has a crucial role in the pathway because the rate of histidine biosynthesis seems to be controlled primarily by regulation of HisG enzymatic activity. This Salinibacter ruber (strain DSM 13855 / M31) protein is ATP phosphoribosyltransferase.